We begin with the raw amino-acid sequence, 1041 residues long: Beta-galactosidase (1041 aa).

2 residues coordinate substrate: asparagine 103 and aspartate 201. Aspartate 201 contacts Na(+). Residues glutamate 415, histidine 417, and glutamate 460 each contribute to the Mg(2+) site. Substrate is bound by residues glutamate 460 and 536 to 539; that span reads EYAH. Glutamate 460 functions as the Proton donor in the catalytic mechanism. Glutamate 536 functions as the Nucleophile in the catalytic mechanism. Position 596 (asparagine 596) interacts with Mg(2+). Na(+) contacts are provided by phenylalanine 600 and asparagine 603. Substrate is bound by residues asparagine 603 and tryptophan 1016.

This sequence belongs to the glycosyl hydrolase 2 family. In terms of assembly, homotetramer. Requires Mg(2+) as cofactor. It depends on Na(+) as a cofactor.

The enzyme catalyses Hydrolysis of terminal non-reducing beta-D-galactose residues in beta-D-galactosides.. The polypeptide is Beta-galactosidase (Alteromonas mediterranea (strain DSM 17117 / CIP 110805 / LMG 28347 / Deep ecotype)).